Here is a 154-residue protein sequence, read N- to C-terminus: MGLSDDEWNHVLGIWAKVEPDLSAHGQEVIIRLFQLHPETQERFAKFKNLTTIDALKSSEEVKKHGTTVLTALGRILKQKNNHEQELKPLAESHATKHKIPVKYLEFICEIIVKVIAEKHPSDFGADSQAAMKKALELFRNDMASKYKEFGFQG.

The region spanning G2–K148 is the Globin domain. Position 65 (H65) interacts with nitrite. O2 is bound at residue H65. Residue H94 coordinates heme b.

Belongs to the globin family. As to quaternary structure, monomeric.

The protein resides in the cytoplasm. It localises to the sarcoplasm. It catalyses the reaction Fe(III)-heme b-[protein] + nitric oxide + H2O = Fe(II)-heme b-[protein] + nitrite + 2 H(+). The catalysed reaction is H2O2 + AH2 = A + 2 H2O. In terms of biological role, monomeric heme protein which primary function is to store oxygen and facilitate its diffusion within muscle tissues. Reversibly binds oxygen through a pentacoordinated heme iron and enables its timely and efficient release as needed during periods of heightened demand. Depending on the oxidative conditions of tissues and cells, and in addition to its ability to bind oxygen, it also has a nitrite reductase activity whereby it regulates the production of bioactive nitric oxide. Under stress conditions, like hypoxia and anoxia, it also protects cells against reactive oxygen species thanks to its pseudoperoxidase activity. The chain is Myoglobin (MB) from Caretta caretta (Loggerhead sea turtle).